The following is a 949-amino-acid chain: ATPase 5, plasma membrane-type (949 aa).

The residue at position 2 (serine 2) is an N-acetylserine. Residues 2–61 (SELDHIKNESVDLVRIPMEEVFEELKCTKQGLTANEASHRLDVFGPNKLEEKKESKLLKF) are Cytoplasmic-facing. Residues 62 to 81 (LGFMWNPLSWVMEVAALMAI) traverse the membrane as a helical segment. At 82–93 (ALANGGGRPPDW) the chain is on the extracellular side. Residues 94 to 114 (QDFVGIVCLLLINSTISFIEE) traverse the membrane as a helical segment. Over 115–243 (NNAGNAAAAL…GHFQKVLTSI (129 aa)) the chain is Cytoplasmic. A helical membrane pass occupies residues 244–264 (GNFCICSIALGIIVELLVMYP). Residues 265–273 (IQRRRYRDG) lie on the Extracellular side of the membrane. Residues 274 to 291 (IDNLLVLLIGGIPIAMPS) traverse the membrane as a helical segment. The Cytoplasmic segment spans residues 292-643 (VLSVTMATGS…TSRAIFQRMK (352 aa)). Aspartate 329 (4-aspartylphosphate intermediate) is an active-site residue. Residues aspartate 588 and aspartate 592 each contribute to the Mg(2+) site. A helical transmembrane segment spans residues 644–665 (NYTIYAVSITIRIVFGFMFIAL). Residues 666 to 670 (IWQFD) are Extracellular-facing. Residues 671 to 693 (FSPFMVLIIAILNDGTIMTISKD) traverse the membrane as a helical segment. At 694–709 (RMKPSPQPDSWKLRDI) the chain is on the cytoplasmic side. Residues 710 to 730 (FSTGVVLGGYQALMTVVFFWV) form a helical membrane-spanning segment. Residues 731–751 (MKDSDFFSNYFGVRPLSQRPE) lie on the Extracellular side of the membrane. The helical transmembrane segment at 752–772 (QMMAALYLQVSIISQALIFVT) threads the bilayer. Residues 773-784 (RSRSWSYAECPG) lie on the Cytoplasmic side of the membrane. Residues 785 to 805 (LLLLGAFVIAQLVATFIAVYA) form a helical membrane-spanning segment. The Extracellular segment spans residues 806–813 (NWSFARIE). Residues 814–834 (GAGWGWAGVIWLYSFLTYIPL) traverse the membrane as a helical segment. The Cytoplasmic portion of the chain corresponds to 835–949 (DLLKFGIRYV…IDTIQQHYTV (115 aa)). Threonine 881 carries the post-translational modification Phosphothreonine. Phosphoserine is present on residues serine 899 and serine 931. The tract at residues 947-949 (YTV) is interaction with 14-3-3 proteins. Position 948 is a phosphothreonine (threonine 948).

The protein belongs to the cation transport ATPase (P-type) (TC 3.A.3) family. Type IIIA subfamily. As to quaternary structure, binds to 14-3-3 proteins. The binding is induced by phosphorylation of Thr-948. Binding to 14-3-3 proteins activates the H(+)-ATPase. As to expression, expressed in guard cells and leaves.

It is found in the membrane. It catalyses the reaction ATP + H2O + H(+)(in) = ADP + phosphate + 2 H(+)(out). Functionally, the plasma membrane H(+) ATPase of plants and fungi generates a proton gradient that drives the active transport of nutrients by H(+)-symport. The resulting external acidification and/or internal alkinization may mediate growth responses. This is ATPase 5, plasma membrane-type (AHA5) from Arabidopsis thaliana (Mouse-ear cress).